Here is a 274-residue protein sequence, read N- to C-terminus: Diaminopimelate epimerase (274 aa).

Residues N11, Q44, and N64 each contribute to the substrate site. C73 acts as the Proton donor in catalysis. Substrate-binding positions include 74–75 (GN), N157, N190, and 208–209 (ER). Residue C217 is the Proton acceptor of the active site. Position 218-219 (218-219 (GS)) interacts with substrate.

The protein belongs to the diaminopimelate epimerase family. Homodimer.

Its subcellular location is the cytoplasm. It catalyses the reaction (2S,6S)-2,6-diaminopimelate = meso-2,6-diaminopimelate. The protein operates within amino-acid biosynthesis; L-lysine biosynthesis via DAP pathway; DL-2,6-diaminopimelate from LL-2,6-diaminopimelate: step 1/1. Catalyzes the stereoinversion of LL-2,6-diaminopimelate (L,L-DAP) to meso-diaminopimelate (meso-DAP), a precursor of L-lysine and an essential component of the bacterial peptidoglycan. This Actinobacillus pleuropneumoniae serotype 3 (strain JL03) protein is Diaminopimelate epimerase.